A 140-amino-acid chain; its full sequence is Mialostatin (140 aa).

A signal peptide spans 1–18 (MAFFKSAVFLVCVVLAAA). Intrachain disulfides connect C90/C103 and C114/C134.

This sequence belongs to the cystatin family. As to expression, expressed in midgut (at protein level).

It localises to the secreted. Its function is as follows. Inhibitor of cysteine proteinases. Inhibits several endogenous midgut digestive cysteine proteases, such as cathepsin L1, L3, B and C, but not aspartic protease cathepsin D1 and cysteine protease legumain. Inhibits proteolysis of blood proteins catalyzed by tick gut cysteine cathepsins. Inhibits host cathepsin B (CSTB), C (CTSC), H (CTSH), K (CTSK), L (CTSL) and S (CTSS). This chain is Mialostatin, found in Ixodes ricinus (Common tick).